The chain runs to 310 residues: Translocator protein BipD (310 aa).

2 coiled-coil regions span residues 127–171 (DPIL…LQDY) and 250–299 (DTAR…AIST).

It belongs to the invasin protein D family.

The protein localises to the secreted. Functionally, required for invasion of epithelial cells, as well as for survival within host cells, escape from endocytic vesicles and subsequent actin-tail formation. Probably regulates the secretion of effectors BipB and BipC and their final integration into the target cell membrane. In Burkholderia pseudomallei (strain 1106a), this protein is Translocator protein BipD (bipD).